A 312-amino-acid polypeptide reads, in one-letter code: Ribosomal protein L11 methyltransferase (312 aa).

The S-adenosyl-L-methionine site is built by Thr-163, Gly-184, Asp-206, and Asn-248.

It belongs to the methyltransferase superfamily. PrmA family.

The protein localises to the cytoplasm. The catalysed reaction is L-lysyl-[protein] + 3 S-adenosyl-L-methionine = N(6),N(6),N(6)-trimethyl-L-lysyl-[protein] + 3 S-adenosyl-L-homocysteine + 3 H(+). Its function is as follows. Methylates ribosomal protein L11. This Clostridium botulinum (strain Okra / Type B1) protein is Ribosomal protein L11 methyltransferase.